Reading from the N-terminus, the 206-residue chain is Twist-related protein 1 (206 aa).

Positions 1–18 are enriched in low complexity; sequence MMQDVSSSPVSPADDSLS. The disordered stretch occupies residues 1–109; that stretch reads MMQDVSSSPV…GGGSPQSYEE (109 aa). A compositionally biased stretch (basic residues) spans 34 to 43; it reads RGARKRRSSR. Gly residues-rich tracts occupy residues 48 to 65 and 78 to 103; these read GSAG…GGDE and SAGG…GGGS. One can recognise a bHLH domain in the interval 112-163; sequence TQRVMANVRERQRTQSLNEAFAALRKIIPTLPSDKLSKIQTLKLAARYIDFL. Residues 165 to 195 form a sufficient for transactivation activity region; sequence QVLQSDELDSKMASCSYVAHERLSYAFSVWR.

Efficient DNA binding requires dimerization with another bHLH protein. Homodimer or heterodimer with E proteins such as TCF3. ID1 binds preferentially to TCF3 but does not interact efficiently with TWIST1 so ID1 levels control the amount of TCF3 available to dimerize with TWIST1 and thus determine the type of dimer formed. In terms of tissue distribution, subset of mesodermal cells.

The protein localises to the nucleus. Its function is as follows. Acts as a transcriptional regulator. Inhibits myogenesis by sequestrating E proteins, inhibiting trans-activation by MEF2, and inhibiting DNA-binding by MYOD1 through physical interaction. This interaction probably involves the basic domains of both proteins. Also represses expression of pro-inflammatory cytokines such as TNFA and IL1B. Regulates cranial suture patterning and fusion. Activates transcription as a heterodimer with E proteins. Regulates gene expression differentially, depending on dimer composition. Homodimers induce expression of FGFR2 and POSTN while heterodimers repress FGFR2 and POSTN expression and induce THBS1 expression. Heterodimerization is also required for osteoblast differentiation. Represses the activity of the circadian transcriptional activator: NPAS2-BMAL1 heterodimer. This is Twist-related protein 1 (Twist1) from Mus musculus (Mouse).